Here is a 211-residue protein sequence, read N- to C-terminus: MNLEDIRREYLLGGLNREDLLPNPIDQFNVWLEQAIASGVPDPTAMTLATVSKSGQPSQRIVLLKHLDQRGFVFFTNYRSHKAEDIAGNPCVSLHFPWHFMERQVKVQGEAVKISTAETLKYFLTRPRESQLAAWASEQSQRIDSRKALLSQFEAMKAKFTKGEIPLPDFWGGYVVKPQAIEFWQGGASRLHDRFLYCNENGSWQISRLAP.

Substrate is bound by residues Arg7–Tyr10 and Lys65. Residues Arg60–Lys65, Phe75–Thr76, Lys82, and Gln104 each bind FMN. Positions 122, 126, and 130 each coordinate substrate. FMN-binding positions include Gln139–Ser140 and Trp184. Arg190–His192 is a substrate binding site. Arg194 is a binding site for FMN.

Belongs to the pyridoxamine 5'-phosphate oxidase family. In terms of assembly, homodimer. The cofactor is FMN.

It catalyses the reaction pyridoxamine 5'-phosphate + O2 + H2O = pyridoxal 5'-phosphate + H2O2 + NH4(+). The catalysed reaction is pyridoxine 5'-phosphate + O2 = pyridoxal 5'-phosphate + H2O2. The protein operates within cofactor metabolism; pyridoxal 5'-phosphate salvage; pyridoxal 5'-phosphate from pyridoxamine 5'-phosphate: step 1/1. It functions in the pathway cofactor metabolism; pyridoxal 5'-phosphate salvage; pyridoxal 5'-phosphate from pyridoxine 5'-phosphate: step 1/1. Functionally, catalyzes the oxidation of either pyridoxine 5'-phosphate (PNP) or pyridoxamine 5'-phosphate (PMP) into pyridoxal 5'-phosphate (PLP). The protein is Pyridoxine/pyridoxamine 5'-phosphate oxidase of Teredinibacter turnerae (strain ATCC 39867 / T7901).